Reading from the N-terminus, the 142-residue chain is Galactose-6-phosphate isomerase subunit LacA (142 aa).

This sequence belongs to the LacAB/RpiB family. As to quaternary structure, heteromultimeric protein consisting of LacA and LacB.

It carries out the reaction aldehydo-D-galactose 6-phosphate = keto-D-tagatose 6-phosphate. The protein operates within carbohydrate metabolism; D-galactose 6-phosphate degradation; D-tagatose 6-phosphate from D-galactose 6-phosphate: step 1/1. The sequence is that of Galactose-6-phosphate isomerase subunit LacA from Streptococcus mutans serotype c (strain ATCC 700610 / UA159).